The primary structure comprises 144 residues: Putative pre-16S rRNA nuclease (144 aa).

It belongs to the YqgF nuclease family.

The protein resides in the cytoplasm. Its function is as follows. Could be a nuclease involved in processing of the 5'-end of pre-16S rRNA. In Blochmanniella pennsylvanica (strain BPEN), this protein is Putative pre-16S rRNA nuclease.